The primary structure comprises 151 residues: Protein ripply1 (151 aa).

A WRPW motif motif is present at residues W57–W60. Positions H96–Y131 are ripply homology domain. Positions L130–K151 are disordered. The segment covering E132–K151 has biased composition (acidic residues).

It belongs to the ripply family.

The protein resides in the nucleus. Functionally, plays a role in somitogenesis. Essential for transcriptional repression of the segmental patterning genes, thus terminating the segmentation program in the presomitic mesoderm, and also required for the maintenance of rostrocaudal polarity in somites. The sequence is that of Protein ripply1 from Homo sapiens (Human).